The primary structure comprises 96 residues: Defensin-like protein 151 (96 aa).

The signal sequence occupies residues 1 to 29 (MKKPSQLSATILTIFVILAIGVMVKETLG). 4 cysteine pairs are disulfide-bonded: cysteine 35–cysteine 88, cysteine 48–cysteine 68, cysteine 53–cysteine 82, and cysteine 57–cysteine 84.

It belongs to the DEFL family.

The protein resides in the secreted. This Arabidopsis thaliana (Mouse-ear cress) protein is Defensin-like protein 151 (LCR17).